The primary structure comprises 333 residues: Phosphoenolpyruvate transferase (333 aa).

A 7,8-didemethyl-8-hydroxy-5-deazariboflavin-binding site is contributed by Asp65.

The protein belongs to the CofD family. As to quaternary structure, homodimer. Mg(2+) is required as a cofactor.

It catalyses the reaction enolpyruvoyl-2-diphospho-5'-guanosine + 7,8-didemethyl-8-hydroxy-5-deazariboflavin = dehydro coenzyme F420-0 + GMP + H(+). It functions in the pathway cofactor biosynthesis; coenzyme F420 biosynthesis. Its function is as follows. Catalyzes the transfer of the phosphoenolpyruvate moiety from enoylpyruvoyl-2-diphospho-5'-guanosine (EPPG) to 7,8-didemethyl-8-hydroxy-5-deazariboflavin (FO) with the formation of dehydro coenzyme F420-0 and GMP. The protein is Phosphoenolpyruvate transferase of Mycobacterium leprae (strain TN).